We begin with the raw amino-acid sequence, 419 residues long: UDP-N-acetylglucosamine 1-carboxyvinyltransferase (419 aa).

22–23 (KN) is a binding site for phosphoenolpyruvate. Arg-95 lines the UDP-N-acetyl-alpha-D-glucosamine pocket. The active-site Proton donor is the Cys-119. Cys-119 is modified (2-(S-cysteinyl)pyruvic acid O-phosphothioketal). UDP-N-acetyl-alpha-D-glucosamine contacts are provided by residues 164–167 (KVSV), Asp-308, and Ile-330.

This sequence belongs to the EPSP synthase family. MurA subfamily.

The protein localises to the cytoplasm. The enzyme catalyses phosphoenolpyruvate + UDP-N-acetyl-alpha-D-glucosamine = UDP-N-acetyl-3-O-(1-carboxyvinyl)-alpha-D-glucosamine + phosphate. It participates in cell wall biogenesis; peptidoglycan biosynthesis. Cell wall formation. Adds enolpyruvyl to UDP-N-acetylglucosamine. This Rickettsia rickettsii (strain Iowa) protein is UDP-N-acetylglucosamine 1-carboxyvinyltransferase.